A 118-amino-acid chain; its full sequence is HTH-type transcriptional regulator SarT (118 aa).

The H-T-H motif DNA-binding region spans 55-78; the sequence is MRDIISYIGIDQSRIVKSVKDLSK.

The protein belongs to the SarA family.

It localises to the cytoplasm. Functionally, transcriptional regulator acting as an intermediary between major regulators sarA and agr and virulence genes. Represses alpha-hemolysin (hla) gene expression. Down-regulates agr RNAIII expression by repressing sarU, a positive activator of agr expression. Up-regulates sarS, which induces the expression of the cell wall-associated protein A (spa). The polypeptide is HTH-type transcriptional regulator SarT (sarT) (Staphylococcus aureus (strain NCTC 8325 / PS 47)).